A 1214-amino-acid polypeptide reads, in one-letter code: MERFRLEKKLPGPDEEAVVDLGKTSSTVNTKFEKEELESHRAVYIGVHVPFSKESRRRHRHRGHKHHHRRRKDKESDKEDGRESPSYDTPSQRVQFILGTEDDDEEHIPHDLFTEMDELCYRDGEEYEWKETARWLKFEEDVEDGGDRWSKPYVATLSLHSLFELRSCILNGTVMLDMRASTLDEIADMVLDNMIASGQLDESIRENVREALLKRHHHQNEKRFTSRIPLVRSFADIGKKHSDPHLLERNGEGLSASRHSLRTGLSASNLSLRGESPLSLLLGHLLPSSRAGTPAGSRCTTPVPTPQNSPPSSPSISRLTSRSSQESQRQAPELLVSPASDDIPTVVIHPPEEDLEAALKGEEQKNEENVDLTPGILASPQSAPGNLDNSKSGEIKGNGSGGSRENSTVDFSKVDMNFMRKIPTGAEASNVLVGEVDFLERPIIAFVRLAPAVLLTGLTEVPVPTRFLFLLLGPAGKAPQYHEIGRSIATLMTDEIFHDVAYKAKDRNDLLSGIDEFLDQVTVLPPGEWDPSIRIEPPKSVPSQEKRKIPVFHNGSTPTLGETPKEAAHHAGPELQRTGRLFGGLILDIKRKAPFFLSDFKDALSLQCLASILFLYCACMSPVITFGGLLGEATEGRISAIESLFGASLTGIAYSLFAGQPLTILGSTGPVLVFEKILYKFCRDYQLSYLSLRTSIGLWTSFLCIVLVATDASSLVCYITRFTEEAFAALICIIFIYEALEKLFDLGETYAFNMHNNLDKLTSYSCVCTEPPNPSNETLAQWKKDNITAHNISWRNLTVSECKKLRGVFLGSACGHHGPYIPDVLFWCVILFFTTFFLSSFLKQFKTKRYFPTKVRSTISDFAVFLTIVIMVTIDYLVGVPSPKLHVPEKFEPTHPERGWIISPLGDNPWWTLLIAAIPALLCTILIFMDQQITAVIINRKEHKLKKGAGYHLDLLMVGVMLGVCSVMGLPWFVAATVLSISHVNSLKVESECSAPGEQPKFLGIREQRVTGLMIFILMGLSVFMTSVLKFIPMPVLYGVFLYMGVSSLKGIQLFDRIKLFGMPAKHQPDLIYLRYVPLWKVHIFTVIQLTCLVLLWVIKVSAAAVVFPMMVLALVFVRKLMDLCFTKRELSWLDDLMPESKKKKEDDKKKKEKEEAERMLQDDDDTVHLPFEGGSLLQIPVKALKYSPDKPVSVKISFEDEPRKKYVDAETSL.

The segment covering 1-12 (MERFRLEKKLPG) has biased composition (basic and acidic residues). Disordered stretches follow at residues 1–22 (MERFRLEKKLPGPDEEAVVDLG) and 52–93 (SKES…PSQR). The Extracellular portion of the chain corresponds to 1 to 608 (MERFRLEKKL…DFKDALSLQC (608 aa)). 6 positions are modified to phosphoserine: Ser52, Ser55, Ser84, Ser150, Leu165, and Cys168. Positions 55 to 72 (SRRRHRHRGHKHHHRRRK) are enriched in basic residues. Over residues 73-85 (DKESDKEDGRESP) the composition is skewed to basic and acidic residues. N-linked (GlcNAc...) asparagine glycosylation occurs at Asn171. Residues Ser233, Ser242, Ser255, Arg258, Ser260, Thr263, Gly264, and Ala267 each carry the phosphoserine modification. Residue Asn269 is glycosylated (N-linked (GlcNAc...) asparagine). Disordered regions lie at residues 289–346 (SRAG…IPTV), 362–408 (EEQK…ENST), and 552–572 (FHNGSTPTLGETPKEAAHHAG). Over residues 303–313 (VPTPQNSPPSS) the composition is skewed to pro residues. Over residues 314-332 (PSISRLTSRSSQESQRQAP) the composition is skewed to low complexity. The span at 379-392 (SPQSAPGNLDNSKS) shows a compositional bias: polar residues. Ser382 is modified (phosphoserine). The N-linked (GlcNAc...) asparagine glycan is linked to Asn398. 2 positions are modified to phosphoserine: Ser400 and Ser403. The N-linked (GlcNAc...) asparagine glycan is linked to Asn406. 2 positions are modified to phosphoserine: Ser407 and Ser556. A Phosphothreonine modification is found at Thr557. Residues 563–572 (TPKEAAHHAG) show a composition bias toward basic and acidic residues. The helical transmembrane segment at 609 to 629 (LASILFLYCACMSPVITFGGL) threads the bilayer. Residues 630-637 (LGEATEGR) lie on the Cytoplasmic side of the membrane. A helical transmembrane segment spans residues 638–658 (ISAIESLFGASLTGIAYSLFA). Topologically, residues 659 to 695 (GQPLTILGSTGPVLVFEKILYKFCRDYQLSYLSLRTS) are extracellular. Residues 696–716 (IGLWTSFLCIVLVATDASSLV) traverse the membrane as a helical segment. At 717 to 725 (CYITRFTEE) the chain is on the cytoplasmic side. The chain crosses the membrane as a helical span at residues 726-746 (AFAALICIIFIYEALEKLFDL). Lys742 is modified (phosphoserine). Residues 747–817 (GETYAFNMHN…VFLGSACGHH (71 aa)) are Extracellular-facing. A disulfide bridge links Cys766 with Cys768. Phosphoserine occurs at positions 771 and 774. Asn776 carries N-linked (GlcNAc...) asparagine glycosylation. The residue at position 780 (Ala780) is a Phosphoserine. Asn786 and Asn791 each carry an N-linked (GlcNAc...) asparagine glycan. Cys802 and Cys814 form a disulfide bridge. Residues 818–838 (GPYIPDVLFWCVILFFTTFFL) form a helical membrane-spanning segment. Topologically, residues 839–861 (SSFLKQFKTKRYFPTKVRSTISD) are cytoplasmic. Residues 862–882 (FAVFLTIVIMVTIDYLVGVPS) form a helical membrane-spanning segment. Topologically, residues 883-908 (PKLHVPEKFEPTHPERGWIISPLGDN) are extracellular. The chain crosses the membrane as a helical span at residues 909-929 (PWWTLLIAAIPALLCTILIFM). Topologically, residues 930–954 (DQQITAVIINRKEHKLKKGAGYHLD) are cytoplasmic. Residues 955–975 (LLMVGVMLGVCSVMGLPWFVA) traverse the membrane as a helical segment. Residues 976-1011 (ATVLSISHVNSLKVESECSAPGEQPKFLGIREQRVT) are Extracellular-facing. Residues Glu1007, Val1010, and Phe1016 each carry the phosphoserine modification. Essential for cell membrane localization and transport activity regions lie at residues 1008-1131 (QRVT…KREL) and 1127-1214 (TKRE…ETSL). A helical transmembrane segment spans residues 1012–1032 (GLMIFILMGLSVFMTSVLKFI). Residues 1033–1034 (PM) lie on the Cytoplasmic side of the membrane. Residues 1035 to 1055 (PVLYGVFLYMGVSSLKGIQLF) traverse the membrane as a helical segment. Over 1056 to 1092 (DRIKLFGMPAKHQPDLIYLRYVPLWKVHIFTVIQLTC) the chain is Extracellular. Tyr1073, Val1077, Ser1102, Ala1105, Val1106, Pro1109, Met1111, and Leu1115 each carry phosphoserine. The helical transmembrane segment at 1093 to 1113 (LVLLWVIKVSAAAVVFPMMVL) threads the bilayer. The Cytoplasmic portion of the chain corresponds to 1114 to 1214 (ALVFVRKLMD…KKYVDAETSL (101 aa)). The interval 1134-1136 (LDD) is CA2-binding. The segment covering 1144 to 1162 (KKEDDKKKKEKEEAERMLQ) has biased composition (basic and acidic residues). A disordered region spans residues 1144–1169 (KKEDDKKKKEKEEAERMLQDDDDTVH). Thr1167 carries the phosphothreonine modification. A phosphoserine mark is found at Ser1176, Ser1188, Asp1201, and Ser1213. The PDZ-binding signature appears at 1211 to 1214 (ETSL).

Belongs to the anion exchanger (TC 2.A.31) family. As to quaternary structure, interacts with CFTR through NHERF1/EBP50. Interacts with USH1C. Forms a complex with ATP6V1B1 and NHERF1/EBP50. Interacts in a pH dependent-manner with CA2/carbonic anhydrase 2. In terms of tissue distribution, highly expressed in testis and spleen. Also expressed in retina, colon, small intestine, ovary, thymus, prostate, muscle, heart and kidney. Expressed in skeletal muscle and heart muscle.

The protein localises to the basolateral cell membrane. It localises to the apical cell membrane. Its subcellular location is the cell projection. The protein resides in the stereocilium. It is found in the cell membrane. It carries out the reaction hydrogencarbonate(in) + Na(+)(in) = hydrogencarbonate(out) + Na(+)(out). With respect to regulation, transporter activity is regulated by CA2/carbonic anhydrase 2, cAMP and PKA. Insensitive to stilbene derivatives. Inhibited by 5-(N-ethyl-N-isopropyl)-amiloride (EIPA). Electroneutral sodium- and bicarbonate-dependent cotransporter with a Na(+):HCO3(-) 1:1 stoichiometry. Mediates the sodium-dependent bicarbonate transport important for pH recovery after acid load as well as for regulation of steady-state pH in the duodenum and vascular smooth muscle cells. Plays a key role in macrophage acidification, mediating bicarbonate import into the cytoplasm which is crucial for net acid extrusion and maintenance of cytoplasmic pH during phagocytosis. Provides cellular bicarbonate for de novo purine and pyrimidine synthesis and is a key mediator of de novo nucleotide synthesis downstream of mTORC1 signaling in proliferating cells. Functionally, plays a key role in macrophage acidification, mediating bicarbonate import into the cytoplasm which is crucial for net acid extrusion and maintenance of cytoplasmic pH during phagocytosis. In Homo sapiens (Human), this protein is Sodium bicarbonate cotransporter 3 (SLC4A7).